The chain runs to 2348 residues: Transcription factor HIVEP3 (2348 aa).

The segment at 1-105 (MDPDQSIKGT…AFMSPGKPEH (105 aa)) is disordered. The segment covering 27-72 (IQTSVSSSAPYPGSGTTAPSESATQELLATQPFSGPSQEKTGQQQK) has biased composition (polar residues). 2 C2H2-type zinc fingers span residues 185–207 (YICQ…IRSH) and 213–235 (YPCG…RKSH). Positions 185-235 (YICQYCSRPCAKPSVLQKHIRSHTGERPYPCGPCGFSFKTKSNLYKHRKSH) are ZAS1. The tract at residues 204 to 1055 (IRSHTGERPY…KGKQESSEEP (852 aa)) is no DNA binding activity or transactivation activity, but complete prevention of TRAF-dependent NF-Kappa-B activation; associates with TRAF2 and JUN. 3 disordered regions span residues 239-401 (IKAG…SPPN), 475-532 (DSVK…PLLR), and 561-628 (ADPE…TKKG). The interval 257 to 280 (EMERIPGEEFEEPTEGESTDSEEE) is acidic 1. Over residues 264 to 281 (EEFEEPTEGESTDSEEET) the composition is skewed to acidic residues. Residues 298 to 323 (PLLSSSLYSSGSHGSSQERCSLSQSS) show a composition bias toward low complexity. Residues 338–352 (SSEHPLSHKPEDTHT) are compositionally biased toward basic and acidic residues. Polar residues-rich tracts occupy residues 372-401 (TFLS…SPPN) and 485-495 (TRRSSVESPKS). 2 stretches are compositionally biased toward low complexity: residues 513–527 (QSLL…STHP) and 589–605 (PLGG…SSKD). The segment covering 606–623 (PTSKPSDEPEPKESDLTK) has biased composition (basic and acidic residues). The segment at 633 to 663 (GANYECTICGARYKKRDNYEAHKKYYCSELQ) adopts a CCHC HIVEP-type zinc-finger fold. Disordered regions lie at residues 692 to 1098 (KLGA…PPYT), 1229 to 1274 (LPPV…TSAP), 1386 to 1427 (EGCS…KADE), 1441 to 1555 (STED…EGTD), and 1654 to 1694 (EVHL…GEPA). The segment covering 736 to 749 (STKSPAEASKSAPS) has biased composition (low complexity). The interval 844-865 (EEPDRPDTEPEPPPKEPEKTEE) is acidic 2. Residues 845 to 865 (EPDRPDTEPEPPPKEPEKTEE) show a composition bias toward basic and acidic residues. The Nuclear localization signal motif lies at 885–891 (PKKKRLR). Low complexity predominate over residues 893–929 (AEMAQSSGESSFESSVPLSRSPSQESSISLSGSSRSA). Over residues 930 to 939 (SFDREDHGKA) the composition is skewed to basic and acidic residues. Polar residues-rich tracts occupy residues 975-985 (SEQSPNVPHSS), 1062-1073 (TKSSVPQISVGT), and 1247-1256 (SSSTEYSSDI). Residues 1409–1433 (METQQQKRVKEEEASKADEKLELVS) adopt a coiled-coil conformation. Basic and acidic residues-rich tracts occupy residues 1416–1427 (RVKEEEASKADE), 1442–1452 (TEDRKKTEKPH), and 1518–1527 (VKKEDPKEQT). Positions 1538-1547 (LPLSDTSPKP) are enriched in low complexity. Residues 1665 to 1694 (SQKDPARVEKEEKQGKAEEGTPTSKRGEPA) show a composition bias toward basic and acidic residues. C2H2-type zinc fingers lie at residues 1720 to 1742 (YVCE…IRTH) and 1748 to 1772 (YVCK…SKAH). The ZAS2 stretch occupies residues 1720–1772 (YVCEECGIRCKKPSMLKKHIRTHTDVRPYVCKHCHFAFKTKGNLTKHMKSKAH). The segment at 1783 to 1841 (EELEAEEGTSDDLHQDSEGQEGAEAVEEHQFSDLEDSDSDSDLDEDEEEEEEEEESQDE) is acidic 3. 2 disordered regions span residues 1786–1990 (EAEE…HLCG) and 2009–2038 (PAGL…ESPP). Residues 1815–1840 (DLEDSDSDSDLDEDEEEEEEEEESQD) are compositionally biased toward acidic residues. Over residues 1871-1902 (PDSTSDEVPQGSSISEATHLTASSCSTPSRGT) the composition is skewed to polar residues. Tandem repeats lie at residues 1897 to 1900 (TPSR), 1927 to 1930 (SPRR), 1933 to 1936 (SPSK), 1961 to 1964 (SPAR), and 2024 to 2027 (SPTR). A compositionally biased stretch (polar residues) spans 1952-1961 (KNDSSPQQCS). Residues 2053-2148 (SPSADKSGLG…QLLSRAPCPL (96 aa)) form a 5 X 4 AA tandem repeats of [ST]-P-X-[RK] region. Disordered stretches follow at residues 2184–2265 (SDLT…QGHQ) and 2284–2348 (KASS…PPSI). Over residues 2203–2216 (SPSASVSPVAKVSK) the composition is skewed to low complexity. Residues 2293 to 2314 (RSSSMDCLAETSTYSPPRSRNL) are compositionally biased toward polar residues.

Interacts with TRAF1 and TRAF2 as well as with JUN. Forms a multimeric complex with RUNX2 and E3 ubiquitin ligase WWP1. Phosphorylated on threonine and serine residues. Phosphorylation by cyclin-dependent kinase CDK1 decreases HIVEP3 DNA binding affinity, and by epidermal growth factor receptor kinase increases its DNA binding affinity. As to expression, expressed in macrophages, lymphocytes, brain, thymus, spleen and bone marrow. Expressed in osteoblasts, whole bone and, to a lesser extent, in osteoclasts.

It localises to the cytoplasm. The protein localises to the nucleus. Its function is as follows. Plays a role of transcription factor; binds to recognition signal sequences (Rss heptamer) for somatic recombination of immunoglobulin and T-cell receptor gene segments; Also binds to the kappa-B motif of gene such as S100A4, involved in cell progression and differentiation. Kappa-B motif is a gene regulatory element found in promoters and enhancers of genes involved in immunity, inflammation, and growth and that responds to viral antigens, mitogens, and cytokines. Involvement of HIVEP3 in cell growth is strengthened by the fact that its down-regulation promotes cell cycle progression with ultimate formation of multinucleated giant cells. Strongly inhibits TNF-alpha-induced NF-kappa-B activation; Interferes with nuclear factor NF-kappa-B by several mechanisms: as transcription factor, by competing for Kappa-B motif and by repressing transcription in the nucleus; through a non transcriptional process, by inhibiting nuclear translocation of RELA by association with TRAF2, an adapter molecule in the tumor necrosis factor signaling, which blocks the formation of IKK complex. Interaction with TRAF proteins inhibits both NF-Kappa-B-mediated and c-Jun N-terminal kinase/JNK-mediated responses that include apoptosis and pro-inflammatory cytokine gene expression. Positively regulates the expression of IL2 in T-cell. Essential regulator of adult bone formation. This is Transcription factor HIVEP3 (Hivep3) from Mus musculus (Mouse).